The following is a 482-amino-acid chain: MSSSSPNPFRRSLKFVEQWYRETPQRALDGAYEAARAIEEIEKKHFKGQPVPLRIRTESVMTNYFQSEVQKNLQFIQTRLREFKSSSLVVEVADKLKPPSIPPAPTPLDTPNTIDFTDEYDVTSEEYSSELVSPSIDAQGSLDKLAFIDAVLKRYRSASIQREAAAAASKAARASAPKSGSEMKKNIPQPLPIQSAQNSLYESEFISDDITEDPSKLDSSSFIPRSILRTATRFRKELNPDPGTEDDILNDFRNSRVRTRAAVSFVLGLMIVPLLTQQVSKNLVIGPFVDKLKGPEQIEIRINPEIENEVLTELARFEERLKFESLTSPIPLSPAEIQFQLKAKAEDLKEEYQWDLRQPLKNAISDLFSLVALAIYFVLNRQKIAVLKSFFDEIIYGLSDSAKAFIIILFTDVFVGFHSPHGWEVIVESVLSHFGLPQDRNFINMFIATFPVMLDTVFKYWIFRYLNQISPSAVATYRNMNE.

The next 4 membrane-spanning stretches (helical) occupy residues 265 to 285, 359 to 379, 406 to 426, and 442 to 462; these read FVLGLMIVPLLTQQVSKNLVI, PLKNAISDLFSLVALAIYFVL, IIILFTDVFVGFHSPHGWEVI, and FINMFIATFPVMLDTVFKYWI.

It belongs to the CemA family.

It localises to the cell inner membrane. Its function is as follows. Required for H(+) efflux immediately after light irradiation to form a rapid H(+) concentration gradient across the thylakoid membranes. Together with PxcL, contributes to transient H(+) uptake following dark to light transition. This is Proton extrusion protein PxcA from Acaryochloris marina (strain MBIC 11017).